The sequence spans 565 residues: Membrane protein insertase YidC (565 aa).

6 consecutive transmembrane segments (helical) span residues Val6–Asn26, Leu348–His368, Trp370–Ala390, Gly437–Val457, Pro479–Pro499, and Pro516–Ile536.

This sequence belongs to the OXA1/ALB3/YidC family. Type 1 subfamily. As to quaternary structure, interacts with the Sec translocase complex via SecD. Specifically interacts with transmembrane segments of nascent integral membrane proteins during membrane integration.

It localises to the cell inner membrane. Required for the insertion and/or proper folding and/or complex formation of integral membrane proteins into the membrane. Involved in integration of membrane proteins that insert both dependently and independently of the Sec translocase complex, as well as at least some lipoproteins. Aids folding of multispanning membrane proteins. This is Membrane protein insertase YidC from Xylella fastidiosa (strain 9a5c).